The chain runs to 456 residues: Phosphomannomutase (456 aa).

Ser98 (phosphoserine intermediate) is an active-site residue. Mg(2+) is bound by residues Ser98, Asp246, Asp248, and Asp250.

This sequence belongs to the phosphohexose mutase family. Mg(2+) serves as cofactor.

It catalyses the reaction alpha-D-mannose 1-phosphate = D-mannose 6-phosphate. It participates in nucleotide-sugar biosynthesis; GDP-alpha-D-mannose biosynthesis; alpha-D-mannose 1-phosphate from D-fructose 6-phosphate: step 2/2. Its pathway is bacterial outer membrane biogenesis; LPS O-antigen biosynthesis. Involved in GDP-mannose biosynthesis which serves as the activated sugar nucleotide precursor for mannose residues in cell surface polysaccharides. This enzyme participates in synthesis of the LPS O9 antigen. The protein is Phosphomannomutase (manB) of Escherichia coli.